The sequence spans 421 residues: UDP-N-acetylglucosamine 1-carboxyvinyltransferase (421 aa).

Lys22–Asn23 contributes to the phosphoenolpyruvate binding site. Arg93 is a UDP-N-acetyl-alpha-D-glucosamine binding site. Cys117 functions as the Proton donor in the catalytic mechanism. Cys117 is modified (2-(S-cysteinyl)pyruvic acid O-phosphothioketal). UDP-N-acetyl-alpha-D-glucosamine contacts are provided by residues Arg122–Leu126, Asp308, and Leu330.

The protein belongs to the EPSP synthase family. MurA subfamily.

The protein localises to the cytoplasm. The catalysed reaction is phosphoenolpyruvate + UDP-N-acetyl-alpha-D-glucosamine = UDP-N-acetyl-3-O-(1-carboxyvinyl)-alpha-D-glucosamine + phosphate. It participates in cell wall biogenesis; peptidoglycan biosynthesis. In terms of biological role, cell wall formation. Adds enolpyruvyl to UDP-N-acetylglucosamine. In Helicobacter hepaticus (strain ATCC 51449 / 3B1), this protein is UDP-N-acetylglucosamine 1-carboxyvinyltransferase.